The primary structure comprises 269 residues: Phosphonoacetaldehyde hydrolase (269 aa).

Asp10 functions as the Nucleophile in the catalytic mechanism. Positions 10 and 12 each coordinate Mg(2+). Lys52 acts as the Schiff-base intermediate with substrate in catalysis. Asp186 contributes to the Mg(2+) binding site.

This sequence belongs to the HAD-like hydrolase superfamily. PhnX family. Homodimer. Requires Mg(2+) as cofactor.

It catalyses the reaction phosphonoacetaldehyde + H2O = acetaldehyde + phosphate + H(+). Functionally, involved in phosphonate degradation. The protein is Phosphonoacetaldehyde hydrolase of Salmonella paratyphi A (strain ATCC 9150 / SARB42).